A 289-amino-acid chain; its full sequence is Spore coat polysaccharide biosynthesis protein SpsD (289 aa).

The N-acetyltransferase domain maps to 137–289 (FELGPPEPGD…YHIWPGKEAK (153 aa)).

It participates in spore coat biogenesis; spore coat polysaccharide biosynthesis. This is Spore coat polysaccharide biosynthesis protein SpsD (spsD) from Bacillus subtilis (strain 168).